The primary structure comprises 221 residues: Histidine biosynthesis bifunctional protein HisIE (221 aa).

Residues 1–121 form a phosphoribosyl-AMP cyclohydrolase region; that stretch reads MNITKIDWQK…KKQQFANWAW (121 aa). A phosphoribosyl-ATP pyrophosphohydrolase region spans residues 122–221; the sequence is FIKLEQHLKE…IGLHPEGGNK (100 aa).

This sequence in the N-terminal section; belongs to the PRA-CH family. The protein in the C-terminal section; belongs to the PRA-PH family.

The protein resides in the cytoplasm. It catalyses the reaction 1-(5-phospho-beta-D-ribosyl)-ATP + H2O = 1-(5-phospho-beta-D-ribosyl)-5'-AMP + diphosphate + H(+). It carries out the reaction 1-(5-phospho-beta-D-ribosyl)-5'-AMP + H2O = 1-(5-phospho-beta-D-ribosyl)-5-[(5-phospho-beta-D-ribosylamino)methylideneamino]imidazole-4-carboxamide. The protein operates within amino-acid biosynthesis; L-histidine biosynthesis; L-histidine from 5-phospho-alpha-D-ribose 1-diphosphate: step 2/9. It participates in amino-acid biosynthesis; L-histidine biosynthesis; L-histidine from 5-phospho-alpha-D-ribose 1-diphosphate: step 3/9. This chain is Histidine biosynthesis bifunctional protein HisIE (hisI), found in Haemophilus influenzae (strain ATCC 51907 / DSM 11121 / KW20 / Rd).